A 203-amino-acid chain; its full sequence is B-cell CLL/lymphoma 7 protein family member B-A (203 aa).

Disordered stretches follow at residues 55–80 (KEKE…ESSD) and 94–148 (SNQS…EIME). The span at 109–129 (ADSSNNSSPPASEPVSPAPQS) shows a compositional bias: low complexity.

It belongs to the BCL7 family.

The polypeptide is B-cell CLL/lymphoma 7 protein family member B-A (bcl7ba) (Danio rerio (Zebrafish)).